The primary structure comprises 104 residues: Cell division topological specificity factor (104 aa).

This sequence belongs to the MinE family.

Prevents the cell division inhibition by proteins MinC and MinD at internal division sites while permitting inhibition at polar sites. This ensures cell division at the proper site by restricting the formation of a division septum at the midpoint of the long axis of the cell. This Sorangium cellulosum (strain So ce56) (Polyangium cellulosum (strain So ce56)) protein is Cell division topological specificity factor.